The chain runs to 168 residues: Ribosome maturation factor RimM (168 aa).

Residues 93–168 (EDEFYQSDLV…IVLNIPEFID (76 aa)) enclose the PRC barrel domain.

Belongs to the RimM family. As to quaternary structure, binds ribosomal protein uS19.

It is found in the cytoplasm. In terms of biological role, an accessory protein needed during the final step in the assembly of 30S ribosomal subunit, possibly for assembly of the head region. Essential for efficient processing of 16S rRNA. May be needed both before and after RbfA during the maturation of 16S rRNA. It has affinity for free ribosomal 30S subunits but not for 70S ribosomes. The protein is Ribosome maturation factor RimM of Wolbachia pipientis wMel.